Here is a 285-residue protein sequence, read N- to C-terminus: Flagellar filament core protein flaB2 (285 aa).

This sequence belongs to the bacterial flagellin family. In terms of assembly, the flagellum consists of an outer layer composed of two sheath proteins, flaA1 (44 kDa) and flaA2 (35 kDa) around a core that contains three proteins flaB1 (37 kDa), flaB2 (34 kDa) and flaB3 (32 kDa).

Its subcellular location is the periplasmic flagellum. It is found in the periplasm. In terms of biological role, component of the core of the flagella. The chain is Flagellar filament core protein flaB2 (flaB2) from Brachyspira hyodysenteriae (Treponema hyodysenteriae).